A 172-amino-acid polypeptide reads, in one-letter code: Probable phosphatase YqeG (172 aa).

Functionally, has low dephosphorylation activity on GMP and glucose-6-phosphate. The chain is Probable phosphatase YqeG (yqeG) from Bacillus subtilis (strain 168).